The primary structure comprises 507 residues: uncharacterized protein (507 aa).

12 consecutive transmembrane segments (helical) span residues 11–31 (ILCF…IFPI), 97–117 (AWIA…YGHL), 125–145 (PVSF…GFAP), 149–169 (VFAV…IVFY), 187–207 (FFNW…CGYW), 209–229 (SAAI…LWLP), 283–303 (LFSS…WFST), 326–346 (FVQA…DLFI), 354–374 (LHQV…ALMI), 388–408 (LAII…WDAC), 423–443 (IGIG…PQMA), and 452–472 (IPYI…CFFL).

Belongs to the major facilitator superfamily.

The protein resides in the membrane. This is an uncharacterized protein from Caenorhabditis elegans.